The chain runs to 159 residues: Phosphopantetheine adenylyltransferase (159 aa).

Residue T10 coordinates substrate. ATP-binding positions include 10–11 (TF) and H18. Residues K42, M74, and R88 each contribute to the substrate site. Residues 89-91 (GLR), E99, and 124-130 (WSFISSS) contribute to the ATP site.

Belongs to the bacterial CoaD family. Homohexamer. The cofactor is Mg(2+).

The protein localises to the cytoplasm. It catalyses the reaction (R)-4'-phosphopantetheine + ATP + H(+) = 3'-dephospho-CoA + diphosphate. Its pathway is cofactor biosynthesis; coenzyme A biosynthesis; CoA from (R)-pantothenate: step 4/5. Reversibly transfers an adenylyl group from ATP to 4'-phosphopantetheine, yielding dephospho-CoA (dPCoA) and pyrophosphate. The protein is Phosphopantetheine adenylyltransferase of Salmonella choleraesuis (strain SC-B67).